Consider the following 1404-residue polypeptide: MASSGAKAQWVGPSLGQGPRRRRWAWAEEQDTDGRRDQGWGNSQSLPEAPSPELLEDFRRAQEHLPPLEWDPDMQDSEESSGEETEADDASSPEGSTVPLPWLSRSNQQLDMSEEELDEASGRPEVDLAGESCTELECEDQGDSSPPPPGQGPAKGWVTFIKQGSNYRPSEHLEAQPSVEHSRTKSWSSGTVSLRQPSDSLGSTWEGDTEVPQPSILPKALPQSPCHNFPHPGDRNGGDVAPATPTEFRDSLAAPAQNAECSAGTWGEETTSLPSSRPEDQTWKRTKTSPKPLPSRFTGSVSPLSTRLGAIKKVVPQHKQGATLAGHSSSQAPKYGRGRRLNYPLPDFSKVGPRVRFPKDENYRPPKSRGHNRQQGSTRPLIFKSPAEIVRDVLLSSGEASLAKESSLAHTITRVPQEFQTPEQATELVHQLQEDYHKLLTKYAEAENTIDQLRLGAKVHLYSDPPQPSQSFCSGSMPQGSKVLSFSIPQPRVAEWWPDPAQDPQASEATGWPFPRTDLSPSSSPGVATPGRLPQSQGIATDQPSTGQTQALTSQASRLLAKVQSFEELVLAGHLPPQDQIKSLEQLRAAHMALEAEYLQACREELLDPQLDASQGSPRTLNLCRELEAEIYHLGQRLEELQDHMDQTQRETEPCRPDLQDSTPTMSFLPQSAHLSMPSGPVSLPDGQTYQEPATTTTTSPGSSCTLPINKKLSLSIKTEESPRGLPVPLRDRTLQVEQDFHGLLERYLSVKSLPEALRDEDEDDLEEEEEEQDHQGPLEVDSPATAPGKTEAVRVPPGERPTQAEESHRDATQEDEEQMGPMKSPDFRPSMARDTYTPVLDTAEVAQRGTKAMVSHQSSLTSLEESRPSELLPRKALLRAGGPHTEEPWMVSPETDSGFVGSETSIVSPFTQTPEHRLSHVSTSGPSAQHLTASVPGDRTSHPKARGLMVPRRATETGIPRSRTQQHFSSLSSPGRGAQSCHLEETSVAKIAVPRSEFKRQKQISKQLLPSGRTSPDSAPAPTAASTPHGSAESTANLLLNRTERDQAIKDLQAEVSRLRLQLEDSLHRPHPDGPACVASAFNHSTQTQEKLGSSPSWGPHYGSKSTERLSREPNGVEPAEPMGRRRARSSSVPRDVPRLYLSSESESPAPRLSSEKSRTFEEHPEAAQWGTRPQSSSKRRERVSFRGQYTGQEYHILSPKAILKDSGTPSCPHCHPIRTQDTGSAVSRDTTRGSSAADTLRCALCGEVKSSAEADGSSSGPSEKNTPKKPSTPILKRKNRQTGSPVRMAPGLWYLAAAPPAPAPPALAYISSAPIMPYLPPTVYYAAPAPTSAQTASPQPARGPRRTRHSVQLGLNDLEELQAALREAAQAAENVRSTTRQLSRSLSADLRHARSLRGSCLF.

2 disordered regions span residues 1–304 and 317–382; these read MASS…VSPL and QHKQ…RPLI. At Ser51 the chain carries Phosphoserine. Positions 70–91 are enriched in acidic residues; that stretch reads WDPDMQDSEESSGEETEADDAS. A compositionally biased stretch (polar residues) spans 185–203; that stretch reads KSWSSGTVSLRQPSDSLGS. Ser302 bears the Phosphoserine mark. Residues Ser485 and Ser520 each carry the phosphoserine modification. A disordered region spans residues 494 to 549; the sequence is AEWWPDPAQDPQASEATGWPFPRTDLSPSSSPGVATPGRLPQSQGIATDQPSTGQT. The segment covering 534–549 has biased composition (polar residues); it reads PQSQGIATDQPSTGQT. Ser617 carries the post-translational modification Phosphoserine. Over residues 645 to 659 the composition is skewed to basic and acidic residues; that stretch reads MDQTQRETEPCRPDL. The interval 645–708 is disordered; it reads MDQTQRETEP…TSPGSSCTLP (64 aa). Composition is skewed to polar residues over residues 660 to 674 and 686 to 707; these read QDST…QSAH and DGQT…SCTL. Ser750 and Ser753 each carry phosphoserine. The interval 754-787 is PEST; the sequence is LPEALRDEDEDDLEEEEEEQDHQGPLEVDSPATA. 2 disordered regions span residues 755–1038 and 1085–1185; these read PEAL…STAN and HSTQ…RERV. Residues 759–773 show a composition bias toward acidic residues; sequence RDEDEDDLEEEEEEQ. Positions 803–813 are enriched in basic and acidic residues; the sequence is TQAEESHRDAT. Phosphoserine occurs at positions 831 and 860. The tract at residues 885–906 is PEST; that stretch reads HTEEPWMVSPETDSGFVGSETS. 3 stretches are compositionally biased toward polar residues: residues 903-914, 921-933, and 963-974; these read SETSIVSPFTQT, HVST…QHLT, and SRTQQHFSSLSS. Ser971 is subject to Phosphoserine. A compositionally biased stretch (low complexity) spans 1015 to 1029; that stretch reads TSPDSAPAPTAASTP. The segment covering 1085-1098 has biased composition (polar residues); that stretch reads HSTQTQEKLGSSPS. The a.T hook DNA-binding region spans 1088–1096; it reads QTQEKLGSS. Phosphoserine occurs at positions 1144 and 1145. Basic and acidic residues predominate over residues 1155-1167; sequence SSEKSRTFEEHPE. The residue at position 1200 (Ser1200) is a Phosphoserine. 2 disordered regions span residues 1208–1235 and 1253–1286; these read SGTP…TTRG and SAEA…QTGS. The segment covering 1221–1235 has biased composition (polar residues); sequence TQDTGSAVSRDTTRG. A phosphoserine mark is found at Ser1339, Ser1352, and Ser1389.

The protein belongs to the AKNA family. Interacts with DCTN1. Interacts with MAPRE1/EB1. Interacts with ODF2. Interacts with CAMSAP3. Phosphorylated; phosphorylation regulates dissociation from and reassembly at the centrosome. As to expression, expressed in neural stem cells isolated at the peak of subventricular zone (SVZ): localizes at the subdistal appendages of the mother centriole in specific subtypes of neural stem cells and in almost all basal progenitors.

It localises to the cytoplasm. The protein localises to the cytoskeleton. Its subcellular location is the microtubule organizing center. The protein resides in the centrosome. It is found in the centriole. It localises to the nucleus. Centrosomal protein that plays a key role in cell delamination by regulating microtubule organization. Required for the delamination and retention of neural stem cells from the subventricular zone during neurogenesis. Also regulates the epithelial-to-mesenchymal transition in other epithelial cells. Acts by increasing centrosomal microtubule nucleation and recruiting nucleation factors and minus-end stabilizers, thereby destabilizing microtubules at the adherens junctions and mediating constriction of the apical endfoot. In addition, may also act as a transcription factor that specifically activates the expression of the CD40 receptor and its ligand CD40L/CD154, two cell surface molecules on lymphocytes that are critical for antigen-dependent-B-cell development. Binds to A/T-rich promoters. It is unclear how it can both act as a microtubule organizer and as a transcription factor; additional evidences are required to reconcile these two apparently contradictory functions. In Mus musculus (Mouse), this protein is Microtubule organization protein AKNA.